Here is a 224-residue protein sequence, read N- to C-terminus: MTKIILTDIEGTTSSLSFVKDVLFPYAREHLPEFVRGHRDDTEVKRLLADARAYAGGDLDEEALIERMIGWIDNDQKITPLKALQGLIWEDGYARGDFQGHVYEDAVAHLRQWHQQGLRLAVYSSGSVHAQKLLFGHTAFGDLNPLFEAYFDTRIGGKRDTASYKAIAKELGVEPREVLFLSDLRAELDAAAEAGMKTTALDRAGNGEDFGPHPVARDFAGVGV.

The protein belongs to the HAD-like hydrolase superfamily. MasA/MtnC family. As to quaternary structure, monomer. Mg(2+) serves as cofactor.

It carries out the reaction 5-methylsulfanyl-2,3-dioxopentyl phosphate + H2O = 1,2-dihydroxy-5-(methylsulfanyl)pent-1-en-3-one + phosphate. It functions in the pathway amino-acid biosynthesis; L-methionine biosynthesis via salvage pathway; L-methionine from S-methyl-5-thio-alpha-D-ribose 1-phosphate: step 3/6. The protein operates within amino-acid biosynthesis; L-methionine biosynthesis via salvage pathway; L-methionine from S-methyl-5-thio-alpha-D-ribose 1-phosphate: step 4/6. Functionally, bifunctional enzyme that catalyzes the enolization of 2,3-diketo-5-methylthiopentyl-1-phosphate (DK-MTP-1-P) into the intermediate 2-hydroxy-3-keto-5-methylthiopentenyl-1-phosphate (HK-MTPenyl-1-P), which is then dephosphorylated to form the acireductone 1,2-dihydroxy-3-keto-5-methylthiopentene (DHK-MTPene). This Thioalkalivibrio sulfidiphilus (strain HL-EbGR7) protein is Enolase-phosphatase E1.